A 558-amino-acid polypeptide reads, in one-letter code: Rhamnogalacturonase B (558 aa).

A signal peptide spans 1–21 (MLLDKLSVLSFLGLAPIFAAA). An intrachain disulfide couples cysteine 42 to cysteine 68. Asparagine 145 is a glycosylation site (N-linked (GlcNAc...) asparagine). Aspartate 219 (proton donor) is an active-site residue. Cysteine 221 and cysteine 238 are oxidised to a cystine. 2 N-linked (GlcNAc...) asparagine glycosylation sites follow: asparagine 239 and asparagine 254. Residue histidine 294 is part of the active site. The N-linked (GlcNAc...) asparagine glycan is linked to asparagine 321. 2 cysteine pairs are disulfide-bonded: cysteine 344–cysteine 350 and cysteine 372–cysteine 381. The span at 503–526 (VGAQEGSTTSAPSFAAPSGAGNSP) shows a compositional bias: low complexity. Positions 503 to 558 (VGAQEGSTTSAPSFAAPSGAGNSPQGPTGASGFGEKGQQGEQGEQGEQGEQGVCYV) are disordered.

The protein belongs to the glycosyl hydrolase 28 family.

The protein localises to the secreted. The enzyme catalyses Endohydrolysis of alpha-D-GalA-(1-&gt;2)-alpha-L-Rha glycosidic bond in the rhamnogalacturonan I backbone with initial inversion of anomeric configuration releasing oligosaccharides with beta-D-GalA at the reducing end.. In terms of biological role, pectinolytic enzymes consist of four classes of enzymes: pectine lyase, polygalacturonase, pectin methylesterase and rhamnogalacturonase. Hydrolyzes alpha-D-galacturonopyranosyl-(1,2)-alpha-L-rhamnopyranosyl linkages in the backbone of the hairy regions of pectins. The chain is Rhamnogalacturonase B (rhgB) from Aspergillus niger.